The chain runs to 102 residues: Antimicrobial peptide 1 (102 aa).

An N-terminal signal peptide occupies residues 1-26 (MASTKLFFSVITVMMLIAMASEMVNG). Disulfide bonds link cysteine 37–cysteine 90, cysteine 47–cysteine 102, and cysteine 49–cysteine 75.

It is found in the secreted. Its function is as follows. Antimicrobial peptide which inhibits the growth of a variety of fungi, oomycetes, Gram-positive bacterial phytopatogenes and S.cerevisiae in vitro. No activity against E.coli. The sequence is that of Antimicrobial peptide 1 from Macadamia integrifolia (Macadamia nut).